Consider the following 184-residue polypeptide: Ribosome-recycling factor (184 aa).

Belongs to the RRF family.

The protein localises to the cytoplasm. Its function is as follows. Responsible for the release of ribosomes from messenger RNA at the termination of protein biosynthesis. May increase the efficiency of translation by recycling ribosomes from one round of translation to another. The chain is Ribosome-recycling factor from Acinetobacter baumannii (strain AB307-0294).